A 379-amino-acid chain; its full sequence is Tryptophan 2,3-dioxygenase (379 aa).

Substrate-binding positions include 57–61 (FIITH) and Arg128. His312 provides a ligand contact to heme. Thr327 lines the substrate pocket.

This sequence belongs to the tryptophan 2,3-dioxygenase family. Homotetramer. Dimer of dimers. Heme is required as a cofactor.

It carries out the reaction L-tryptophan + O2 = N-formyl-L-kynurenine. It participates in amino-acid degradation; L-tryptophan degradation via kynurenine pathway; L-kynurenine from L-tryptophan: step 1/2. The protein operates within pigment biosynthesis; ommochrome biosynthesis. In terms of biological role, heme-dependent dioxygenase that catalyzes the oxidative cleavage of the L-tryptophan (L-Trp) pyrrole ring and converts L-tryptophan to N-formyl-L-kynurenine. Catalyzes the oxidative cleavage of the indole moiety. The sequence is that of Tryptophan 2,3-dioxygenase from Drosophila yakuba (Fruit fly).